The following is a 387-amino-acid chain: Succinyl-diaminopimelate desuccinylase (387 aa).

His75 is a Zn(2+) binding site. Residue Asp77 is part of the active site. Asp108 is a binding site for Zn(2+). Glu139 serves as the catalytic Proton acceptor. Zn(2+) contacts are provided by Glu140, Glu168, and His357.

It belongs to the peptidase M20A family. DapE subfamily. In terms of assembly, homodimer. The cofactor is Zn(2+). It depends on Co(2+) as a cofactor.

It catalyses the reaction N-succinyl-(2S,6S)-2,6-diaminopimelate + H2O = (2S,6S)-2,6-diaminopimelate + succinate. It functions in the pathway amino-acid biosynthesis; L-lysine biosynthesis via DAP pathway; LL-2,6-diaminopimelate from (S)-tetrahydrodipicolinate (succinylase route): step 3/3. Catalyzes the hydrolysis of N-succinyl-L,L-diaminopimelic acid (SDAP), forming succinate and LL-2,6-diaminopimelate (DAP), an intermediate involved in the bacterial biosynthesis of lysine and meso-diaminopimelic acid, an essential component of bacterial cell walls. The sequence is that of Succinyl-diaminopimelate desuccinylase from Caulobacter sp. (strain K31).